Consider the following 290-residue polypeptide: uncharacterized protein (290 aa).

This is an uncharacterized protein from Psittacid herpesvirus 1 (isolate Amazon parrot/-/97-0001/1997) (PsHV-1).